Consider the following 211-residue polypeptide: Small ribosomal subunit protein uS3 (211 aa).

The KH type-2 domain occupies 38–106; that stretch reads LRSFVKKTFH…EVELHIVEVK (69 aa).

The protein belongs to the universal ribosomal protein uS3 family. As to quaternary structure, part of the 30S ribosomal subunit. Forms a tight complex with proteins S10 and S14.

Functionally, binds the lower part of the 30S subunit head. Binds mRNA in the 70S ribosome, positioning it for translation. This Anaplasma phagocytophilum (strain HZ) protein is Small ribosomal subunit protein uS3.